We begin with the raw amino-acid sequence, 128 residues long: KRAB domain-containing protein 1 (128 aa).

The KRAB domain maps to 15–86; it reads VAFEDVAVYF…QPQGVLSRND (72 aa).

The polypeptide is KRAB domain-containing protein 1 (KRBOX1) (Homo sapiens (Human)).